The primary structure comprises 130 residues: Small ribosomal subunit protein uS11 (130 aa).

Belongs to the universal ribosomal protein uS11 family. As to quaternary structure, part of the 30S ribosomal subunit. Interacts with proteins S7 and S18. Binds to IF-3.

Its function is as follows. Located on the platform of the 30S subunit, it bridges several disparate RNA helices of the 16S rRNA. Forms part of the Shine-Dalgarno cleft in the 70S ribosome. This is Small ribosomal subunit protein uS11 from Shewanella sediminis (strain HAW-EB3).